The chain runs to 129 residues: Small ribosomal subunit protein uS11 (129 aa).

The protein belongs to the universal ribosomal protein uS11 family. As to quaternary structure, part of the 30S ribosomal subunit. Interacts with proteins S7 and S18. Binds to IF-3.

Functionally, located on the platform of the 30S subunit, it bridges several disparate RNA helices of the 16S rRNA. Forms part of the Shine-Dalgarno cleft in the 70S ribosome. The chain is Small ribosomal subunit protein uS11 from Parabacteroides distasonis (strain ATCC 8503 / DSM 20701 / CIP 104284 / JCM 5825 / NCTC 11152).